The chain runs to 449 residues: F-box/LRR-repeat protein At3g60040 (449 aa).

The F-box domain maps to 12 to 64; it reads RDAISWLPDEVLGKILSLIPTKQAVSTSLLAKKWRTIFRLVDHLELDDSFSLQ. 6 LRR repeats span residues 161–188, 191–215, 216–237, 239–263, 287–312, and 340–365; these read LTLGTQLCLGQLPSYVSLPSLKSLFIDT, FYDIEDLCCVLLAGCPVLEELSVHH, HDFIATPHTISSPTLKRLSVDY, CPDDVDSASHMSFDLPKLVYLEYSH, ERKVLRMDVTDLIIGIRNVQSLHLSP, and KNKRGWRLLANLLKQSTKLETLIVKD.

This is F-box/LRR-repeat protein At3g60040 from Arabidopsis thaliana (Mouse-ear cress).